Consider the following 187-residue polypeptide: Ubiquinol-cytochrome c reductase iron-sulfur subunit (187 aa).

The chain crosses the membrane as a helical span at residues 15 to 35 (LYYATAGAGAVATGAAVWPLI). The 97-residue stretch at 89 to 185 (QLGQLVDTNA…AKFIDETTIQ (97 aa)) folds into the Rieske domain. Cys129, His131, Cys149, and His152 together coordinate [2Fe-2S] cluster. Cysteines 134 and 151 form a disulfide.

Belongs to the Rieske iron-sulfur protein family. As to quaternary structure, the main subunits of complex b-c1 are: cytochrome b, cytochrome c1 and the Rieske protein. Requires [2Fe-2S] cluster as cofactor.

Its subcellular location is the cell membrane. It catalyses the reaction a quinol + 2 Fe(III)-[cytochrome c](out) = a quinone + 2 Fe(II)-[cytochrome c](out) + 2 H(+)(out). Functionally, component of the ubiquinol-cytochrome c reductase complex (complex III or cytochrome b-c1 complex), which is a respiratory chain that generates an electrochemical potential coupled to ATP synthesis. The protein is Ubiquinol-cytochrome c reductase iron-sulfur subunit (petA) of Cereibacter sphaeroides (Rhodobacter sphaeroides).